Reading from the N-terminus, the 461-residue chain is DNA polymerase delta subunit 3 (461 aa).

Disordered regions lie at residues 148 to 229 (VAQA…SAKG), 249 to 380 (VPGQ…KRVL), and 399 to 461 (YESE…CQKK). Over residues 155 to 172 (ARSSSQTPSDTSAVSTPP) the composition is skewed to polar residues. A compositionally biased stretch (basic and acidic residues) spans 205-214 (DANKEPKAKE). The segment covering 215 to 228 (APSVSAASSKPSAK) has biased composition (low complexity). Positions 279–304 (KPGRKTEPAKIQQKDKKSKMKRMDKS) are enriched in basic and acidic residues. A compositionally biased stretch (basic residues) spans 371–380 (GKKRKRKRVL). The span at 427–436 (VKKEPKEERK) shows a compositional bias: basic and acidic residues. Residues 451 to 458 (QISIMGFC) carry the PIP-box motif.

As to quaternary structure, component of both the DNA polymerase delta and DNA polymerase zeta complexes. The tetrameric DNA polymerase delta complex (Pol-delta4), which consists of POLD1/p125, POLD2/p50, POLD3/p66/p68 and POLD4/p12, with POLD1 bearing DNA polymerase and 3' to 5' proofreading exonuclease activities.

It is found in the cytoplasm. The protein localises to the nucleus. Its function is as follows. Accessory component of both the DNA polymerase delta complex and the DNA polymerase zeta complex. As a component of the trimeric and tetrameric DNA polymerase delta complexes (Pol-delta3 and Pol-delta4, respectively), plays a role in high fidelity genome replication, including in lagging strand synthesis, and repair. Required for optimal Pol-delta activity. Stabilizes the Pol-delta complex and plays a major role in Pol-delta stimulation by PCNA. Pol-delta3 and Pol-delta4 are characterized by the absence or the presence of POLD4. They exhibit differences in catalytic activity. Most notably, Pol-delta3 shows higher proofreading activity than Pol-delta4. Although both Pol-delta3 and Pol-delta4 process Okazaki fragments in vitro, Pol-delta3 may also be better suited to fulfill this task, exhibiting near-absence of strand displacement activity compared to Pol-delta4 and stalling on encounter with the 5'-blocking oligonucleotides. Pol-delta3 idling process may avoid the formation of a gap, while maintaining a nick that can be readily ligated. Along with DNA polymerase kappa, DNA polymerase delta carries out approximately half of nucleotide excision repair (NER) synthesis following UV irradiation. In this context, POLD3, along with PCNA and RFC1-replication factor C complex, is required to recruit POLD1, the catalytic subunit of the polymerase delta complex, to DNA damage sites. Under conditions of DNA replication stress, required for the repair of broken replication forks through break-induced replication (BIR). Involved in the translesion synthesis (TLS) of templates carrying O6-methylguanine or abasic sites performed by Pol-delta4, independently of DNA polymerase zeta (REV3L) or eta (POLH). Facilitates abasic site bypass by DNA polymerase delta by promoting extension from the nucleotide inserted opposite the lesion. Also involved in TLS, as a component of the tetrameric DNA polymerase zeta complex. Along with POLD2, dramatically increases the efficiency and processivity of DNA synthesis of the DNA polymerase zeta complex compared to the minimal zeta complex, consisting of only REV3L and REV7. This is DNA polymerase delta subunit 3 (POLD3) from Gallus gallus (Chicken).